We begin with the raw amino-acid sequence, 189 residues long: Elongation factor P (189 aa).

This sequence belongs to the elongation factor P family.

The protein resides in the cytoplasm. Its pathway is protein biosynthesis; polypeptide chain elongation. Involved in peptide bond synthesis. Stimulates efficient translation and peptide-bond synthesis on native or reconstituted 70S ribosomes in vitro. Probably functions indirectly by altering the affinity of the ribosome for aminoacyl-tRNA, thus increasing their reactivity as acceptors for peptidyl transferase. The sequence is that of Elongation factor P from Rhizobium radiobacter (Agrobacterium tumefaciens).